Reading from the N-terminus, the 286-residue chain is 4-diphosphocytidyl-2-C-methyl-D-erythritol kinase (286 aa).

Residue Lys-8 is part of the active site. 92-102 provides a ligand contact to ATP; that stretch reads PVSAGLAGGST. Asp-134 is a catalytic residue.

The protein belongs to the GHMP kinase family. IspE subfamily.

It carries out the reaction 4-CDP-2-C-methyl-D-erythritol + ATP = 4-CDP-2-C-methyl-D-erythritol 2-phosphate + ADP + H(+). It functions in the pathway isoprenoid biosynthesis; isopentenyl diphosphate biosynthesis via DXP pathway; isopentenyl diphosphate from 1-deoxy-D-xylulose 5-phosphate: step 3/6. In terms of biological role, catalyzes the phosphorylation of the position 2 hydroxy group of 4-diphosphocytidyl-2C-methyl-D-erythritol. This Caldicellulosiruptor bescii (strain ATCC BAA-1888 / DSM 6725 / KCTC 15123 / Z-1320) (Anaerocellum thermophilum) protein is 4-diphosphocytidyl-2-C-methyl-D-erythritol kinase.